The following is a 317-amino-acid chain: L-lactate dehydrogenase 1 (317 aa).

NAD(+) is bound by residues Val17, Asp38, Lys43, Tyr69, and 83–84; that span reads GA. Residues Gln86 and Arg92 each contribute to the substrate site. Residues Ser105, 122–124, and Ser147 each bind NAD(+); that span reads ATN. 124–127 serves as a coordination point for substrate; the sequence is NPVD. 152–155 serves as a coordination point for substrate; it reads DSAR. The active-site Proton acceptor is His179. Phosphotyrosine is present on Tyr223. Residue Thr232 coordinates substrate.

This sequence belongs to the LDH/MDH superfamily. LDH family. As to quaternary structure, homotetramer.

The protein localises to the cytoplasm. It carries out the reaction (S)-lactate + NAD(+) = pyruvate + NADH + H(+). The protein operates within fermentation; pyruvate fermentation to lactate; (S)-lactate from pyruvate: step 1/1. Catalyzes the conversion of lactate to pyruvate (Potential). Appears to be the primary factor that allows S.aureus growth during nitrosative stress in both aerobically and anaerobically cultured cells. The sequence is that of L-lactate dehydrogenase 1 from Staphylococcus aureus (strain USA300).